A 307-amino-acid chain; its full sequence is MSVTAAQVKELRELSGAGMMDCKAALAETNGDMDAAVDWLRKKGIAKADKKAGRTAAEGLIGVVSKDSHAVLVEINSETDFVARNDGFQDIVRNVATAALDTPGDVESVSVSLYPGSEKTVELTIKDAIGTIGENMTFRRSAKLSVENGVVATYIHNSVSDGLGKLGVLVAIETTGNKEAALAFGRQVAMHIAATNPLALTAQDVDAGAVEREKAIFSDQARQSGKPENIIEKMVEGRMRKFFEEVVLLSQAFVMNPDMTVEAALKDAEKSIGAPAKITGFIRFALGEGVEKEETDFAAEVAAAVKG.

The interval 79–82 is involved in Mg(2+) ion dislocation from EF-Tu; it reads TDFV.

This sequence belongs to the EF-Ts family.

It is found in the cytoplasm. Its function is as follows. Associates with the EF-Tu.GDP complex and induces the exchange of GDP to GTP. It remains bound to the aminoacyl-tRNA.EF-Tu.GTP complex up to the GTP hydrolysis stage on the ribosome. In Bartonella tribocorum (strain CIP 105476 / IBS 506), this protein is Elongation factor Ts.